The following is a 153-amino-acid chain: Movement protein TGB3 (153 aa).

Residues 1 to 50 lie on the Cytoplasmic side of the membrane; the sequence is MEAPAITHSSGCVCSDCQWSGSPTVDTKVYLGSGTHANTTKTRETSFLSV. The helical transmembrane segment at 51-71 threads the bilayer; that stretch reads LNDNAWLFVIAALILCLYFII. The Lumenal segment spans residues 72–127; that stretch reads SKPHVDAVYTEFHQDLNGFSMKLAPGVPIDPKVIAAVKNWQKYPFGTDPRENMVTS. The chain crosses the membrane as a helical span at residues 128-148; that stretch reads IVSGLRHSFCILLLVVVLLVY. Over 149 to 153 the chain is Cytoplasmic; sequence VCHKP.

Belongs to the virgaviridae TGB3 movement protein family. Interacts with movement proteins TGB1 and TGB2. TGB1-TGB3-TGB2 complex formation is enhanced by ATP hydrolysis.

It localises to the host cell junction. Its subcellular location is the host plasmodesma. The protein resides in the host endoplasmic reticulum membrane. It is found in the host cytoplasm. The protein localises to the host cytoskeleton. Functionally, participates in the transport of viral genome to neighboring plant cells directly through plasmodesmata, without any budding. TGBp2 and TGBp3 are necessary for intracellular delivery of TGBp1-containing vRNPs to plasmodesmata. Can gate plasmodesmata and increase their size exclusion limit. Induces host actin cytoskeleton network thickening, which probably plays a major role in virus cell-to-cell movement. This Arachis hypogaea (Peanut) protein is Movement protein TGB3.